A 333-amino-acid polypeptide reads, in one-letter code: DNA-directed RNA polymerase subunit alpha (333 aa).

Residues 1–233 (MVREKVRVST…DLFIPFLHAE (233 aa)) form an alpha N-terminal domain (alpha-NTD) region. The tract at residues 266-333 (KKEIAFKSIF…DILEIEKHFP (68 aa)) is alpha C-terminal domain (alpha-CTD).

Belongs to the RNA polymerase alpha chain family. As to quaternary structure, in plastids the minimal PEP RNA polymerase catalytic core is composed of four subunits: alpha, beta, beta', and beta''. When a (nuclear-encoded) sigma factor is associated with the core the holoenzyme is formed, which can initiate transcription.

It localises to the plastid. It is found in the chloroplast. It carries out the reaction RNA(n) + a ribonucleoside 5'-triphosphate = RNA(n+1) + diphosphate. Its function is as follows. DNA-dependent RNA polymerase catalyzes the transcription of DNA into RNA using the four ribonucleoside triphosphates as substrates. The sequence is that of DNA-directed RNA polymerase subunit alpha from Lotus japonicus (Lotus corniculatus var. japonicus).